Here is a 255-residue protein sequence, read N- to C-terminus: Pyrroloquinoline-quinone synthase (255 aa).

This sequence belongs to the PqqC family.

It carries out the reaction 6-(2-amino-2-carboxyethyl)-7,8-dioxo-1,2,3,4,7,8-hexahydroquinoline-2,4-dicarboxylate + 3 O2 = pyrroloquinoline quinone + 2 H2O2 + 2 H2O + H(+). Its pathway is cofactor biosynthesis; pyrroloquinoline quinone biosynthesis. Functionally, ring cyclization and eight-electron oxidation of 3a-(2-amino-2-carboxyethyl)-4,5-dioxo-4,5,6,7,8,9-hexahydroquinoline-7,9-dicarboxylic-acid to PQQ. This Acinetobacter baylyi (strain ATCC 33305 / BD413 / ADP1) protein is Pyrroloquinoline-quinone synthase.